A 427-amino-acid polypeptide reads, in one-letter code: 3-phosphoshikimate 1-carboxyvinyltransferase (427 aa).

3-phosphoshikimate-binding residues include K22, S23, and R27. Residue K22 participates in phosphoenolpyruvate binding. Residues G96 and R124 each coordinate phosphoenolpyruvate. Positions 169, 170, 171, 197, 313, 336, and 340 each coordinate 3-phosphoshikimate. A phosphoenolpyruvate-binding site is contributed by Q171. D313 (proton acceptor) is an active-site residue. Phosphoenolpyruvate-binding residues include R344, R386, and K411.

This sequence belongs to the EPSP synthase family. As to quaternary structure, monomer.

The protein localises to the cytoplasm. It catalyses the reaction 3-phosphoshikimate + phosphoenolpyruvate = 5-O-(1-carboxyvinyl)-3-phosphoshikimate + phosphate. It participates in metabolic intermediate biosynthesis; chorismate biosynthesis; chorismate from D-erythrose 4-phosphate and phosphoenolpyruvate: step 6/7. In terms of biological role, catalyzes the transfer of the enolpyruvyl moiety of phosphoenolpyruvate (PEP) to the 5-hydroxyl of shikimate-3-phosphate (S3P) to produce enolpyruvyl shikimate-3-phosphate and inorganic phosphate. This Shigella sonnei protein is 3-phosphoshikimate 1-carboxyvinyltransferase.